The primary structure comprises 434 residues: Chaperone SurA (434 aa).

The first 22 residues, 1-22 (MKHSKKIVTALLALAMSQTVMA), serve as a signal peptide directing secretion. 2 PpiC domains span residues 173-274 (EVEF…KVMD) and 283-383 (VEEV…QLMD).

The protein localises to the periplasm. It catalyses the reaction [protein]-peptidylproline (omega=180) = [protein]-peptidylproline (omega=0). In terms of biological role, chaperone involved in the correct folding and assembly of outer membrane proteins. Recognizes specific patterns of aromatic residues and the orientation of their side chains, which are found more frequently in integral outer membrane proteins. May act in both early periplasmic and late outer membrane-associated steps of protein maturation. This is Chaperone SurA from Shewanella denitrificans (strain OS217 / ATCC BAA-1090 / DSM 15013).